The chain runs to 624 residues: Bifunctional protein ArgH (624 aa).

The tract at residues 1-466 (MALWGGRFSQ…QERDNAGVKV (466 aa)) is argininosuccinate lyase. The region spanning 464–614 (VKVRPARLTD…DEVALEVNLQ (151 aa)) is the N-acetyltransferase domain. The interval 467–624 (RPARLTDLDA…EQVIIKSSVA (158 aa)) is probable acetyltransferase.

The protein in the N-terminal section; belongs to the lyase 1 family. Argininosuccinate lyase subfamily.

The protein resides in the cytoplasm. The catalysed reaction is 2-(N(omega)-L-arginino)succinate = fumarate + L-arginine. It functions in the pathway amino-acid biosynthesis; L-arginine biosynthesis; L-arginine from L-ornithine and carbamoyl phosphate: step 3/3. This Aliivibrio fischeri (strain ATCC 700601 / ES114) (Vibrio fischeri) protein is Bifunctional protein ArgH (argH).